The sequence spans 498 residues: Na(+)/H(+) exchange regulatory cofactor NHE-RF4 (498 aa).

4 consecutive PDZ domains span residues Phe49–His130, Leu157–Glu235, Cys263–Glu346, and Gln394–Asn475. A Phosphoserine modification is found at Ser329.

Interacts with the C-terminal region of GUCY2C. Interacts with C-terminal region of SLC9A3 and the interactions decrease in response to elevated calcium ion levels. Interacts with the C-terminal region of SLC34A1. Interacts with USP2 isoform 2. Interacts (via the third PDZ domain) with SLC26A3 (via PDZ-binding motif). This interaction leads to decreased expression of SLC26A3 on the cell membrane resulting in its reduced exchanger activity. Post-translationally, phosphorylation at Ser-329 negatively regulates its interaction with SLC26A3. Expressed in kidney and small intestine. Not detected in heart, brain, spleen, lung, liver, skeletal muscle or testis.

It is found in the cell membrane. Its subcellular location is the cytoplasm. In terms of biological role, acts as a regulatory protein that associates with GUCY2C and negatively modulates its heat-stable enterotoxin-mediated activation. Stimulates SLC9A3 activity in the presence of elevated calcium ions. The chain is Na(+)/H(+) exchange regulatory cofactor NHE-RF4 (Nherf4) from Mus musculus (Mouse).